Reading from the N-terminus, the 279-residue chain is Diaminopimelate epimerase (279 aa).

Substrate is bound by residues N12, Q45, and N65. C74 functions as the Proton donor in the catalytic mechanism. Substrate contacts are provided by residues 75 to 76 (GN), N162, N195, and 213 to 214 (ER). C222 (proton acceptor) is an active-site residue. Residue 223–224 (GS) coordinates substrate.

It belongs to the diaminopimelate epimerase family. Homodimer.

It is found in the cytoplasm. It catalyses the reaction (2S,6S)-2,6-diaminopimelate = meso-2,6-diaminopimelate. It functions in the pathway amino-acid biosynthesis; L-lysine biosynthesis via DAP pathway; DL-2,6-diaminopimelate from LL-2,6-diaminopimelate: step 1/1. Catalyzes the stereoinversion of LL-2,6-diaminopimelate (L,L-DAP) to meso-diaminopimelate (meso-DAP), a precursor of L-lysine and an essential component of the bacterial peptidoglycan. The protein is Diaminopimelate epimerase of Shewanella loihica (strain ATCC BAA-1088 / PV-4).